We begin with the raw amino-acid sequence, 144 residues long: 3-hydroxyacyl-[acyl-carrier-protein] dehydratase FabZ (144 aa).

The active site involves histidine 51.

Belongs to the thioester dehydratase family. FabZ subfamily.

It is found in the cytoplasm. It catalyses the reaction a (3R)-hydroxyacyl-[ACP] = a (2E)-enoyl-[ACP] + H2O. Its function is as follows. Involved in unsaturated fatty acids biosynthesis. Catalyzes the dehydration of short chain beta-hydroxyacyl-ACPs and long chain saturated and unsaturated beta-hydroxyacyl-ACPs. The sequence is that of 3-hydroxyacyl-[acyl-carrier-protein] dehydratase FabZ from Lactococcus lactis subsp. cremoris (strain SK11).